Reading from the N-terminus, the 306-residue chain is Pantothenate kinase (306 aa).

91–98 (GSVAVGKS) lines the ATP pocket.

This sequence belongs to the prokaryotic pantothenate kinase family.

It is found in the cytoplasm. The catalysed reaction is (R)-pantothenate + ATP = (R)-4'-phosphopantothenate + ADP + H(+). The protein operates within cofactor biosynthesis; coenzyme A biosynthesis; CoA from (R)-pantothenate: step 1/5. In Streptococcus pyogenes serotype M12 (strain MGAS2096), this protein is Pantothenate kinase.